Here is a 539-residue protein sequence, read N- to C-terminus: Nucleobase-ascorbate transporter 8 (539 aa).

The disordered stretch occupies residues 1-20 (MAGDGVENAKPPQKQEDLQP). Helical transmembrane passes span 44 to 64 (ILLG…IPTM), 79 to 99 (LIQT…FFGT), 101 to 121 (LPAV…IVLA), 141 to 161 (IQGA…SGLW), 167 to 187 (FLSP…LYEQ), 189 to 209 (FPML…LVIF), 229 to 249 (FAVI…TIGG), 295 to 315 (IFAM…TYIA), 368 to 388 (VGSR…SILG), 399 to 421 (APIV…LSLI), 433 to 453 (FILG…YQYT), and 470 to 490 (NIIN…AFFL).

Belongs to the nucleobase:cation symporter-2 (NCS2) (TC 2.A.40) family. As to expression, highly expressed in ovules, endosperm and embryo.

The protein localises to the cell membrane. In Arabidopsis thaliana (Mouse-ear cress), this protein is Nucleobase-ascorbate transporter 8 (NAT8).